A 471-amino-acid polypeptide reads, in one-letter code: Putative multidrug resistance protein MdtD (471 aa).

A run of 13 helical transmembrane segments spans residues Leu-12 to Ala-32, Met-49 to Ala-69, Ile-77 to Thr-97, Val-102 to Met-124, Phe-138 to Val-158, Trp-165 to Met-185, Leu-197 to Ser-217, Leu-222 to Leu-242, Phe-263 to Met-283, Val-286 to Met-306, Leu-342 to Leu-362, Met-396 to Phe-416, and Val-431 to Ala-451.

It belongs to the major facilitator superfamily. TCR/Tet family.

The protein resides in the cell inner membrane. This is Putative multidrug resistance protein MdtD from Citrobacter koseri (strain ATCC BAA-895 / CDC 4225-83 / SGSC4696).